The primary structure comprises 350 residues: Glyoxylate reductase 1 (350 aa).

A Phosphothreonine modification is found at Thr31. NAD(+)-binding positions include 173–174, 252–254, and Asp278; these read RI and TAR. Residue Arg254 is part of the active site. Glu283 is an active-site residue. His301 functions as the Proton donor in the catalytic mechanism. 301-304 lines the NAD(+) pocket; sequence HMGT.

This sequence belongs to the D-isomer specific 2-hydroxyacid dehydrogenase family.

It is found in the cytoplasm. Its subcellular location is the nucleus. It localises to the mitochondrion. It carries out the reaction glycolate + NAD(+) = glyoxylate + NADH + H(+). The catalysed reaction is glycolate + NADP(+) = glyoxylate + NADPH + H(+). The enzyme catalyses (R)-glycerate + NAD(+) = 3-hydroxypyruvate + NADH + H(+). It catalyses the reaction (R)-glycerate + NADP(+) = 3-hydroxypyruvate + NADPH + H(+). Functionally, glyoxylate reductase that reversibly reduces glyoxylate to glycolate, or alternatively hydroxypyruvate to D-glycerate, using either NADPH or NADH as a cosubstrate. Does not act as a hydroxyisocaproate dehydrogenase even though it also has minor activity on alpha-ketoisocaproate. The polypeptide is Glyoxylate reductase 1 (Saccharomyces cerevisiae (strain ATCC 204508 / S288c) (Baker's yeast)).